A 103-amino-acid polypeptide reads, in one-letter code: Large ribosomal subunit protein bL21 (103 aa).

Belongs to the bacterial ribosomal protein bL21 family. As to quaternary structure, part of the 50S ribosomal subunit. Contacts protein L20.

Its function is as follows. This protein binds to 23S rRNA in the presence of protein L20. This Caldicellulosiruptor saccharolyticus (strain ATCC 43494 / DSM 8903 / Tp8T 6331) protein is Large ribosomal subunit protein bL21.